Reading from the N-terminus, the 159-residue chain is Aspartate carbamoyltransferase regulatory chain (159 aa).

The Zn(2+) site is built by Cys-113, Cys-118, Cys-143, and Cys-146.

This sequence belongs to the PyrI family. Contains catalytic and regulatory chains. Requires Zn(2+) as cofactor.

Involved in allosteric regulation of aspartate carbamoyltransferase. The polypeptide is Aspartate carbamoyltransferase regulatory chain (Methanococcoides burtonii (strain DSM 6242 / NBRC 107633 / OCM 468 / ACE-M)).